The primary structure comprises 355 residues: Peptide chain release factor 1 (355 aa).

Q233 is modified (N5-methylglutamine).

It belongs to the prokaryotic/mitochondrial release factor family. In terms of processing, methylated by PrmC. Methylation increases the termination efficiency of RF1.

It localises to the cytoplasm. Peptide chain release factor 1 directs the termination of translation in response to the peptide chain termination codons UAG and UAA. The polypeptide is Peptide chain release factor 1 (Bacillus cereus (strain ATCC 14579 / DSM 31 / CCUG 7414 / JCM 2152 / NBRC 15305 / NCIMB 9373 / NCTC 2599 / NRRL B-3711)).